Here is a 158-residue protein sequence, read N- to C-terminus: SUMO-conjugating enzyme UBC9 (158 aa).

A UBC core domain is found at 4–157; sequence IALSRLAQER…VRAQAKKFSP (154 aa). The interaction with sumo1 stretch occupies residues 13–18; it reads RKAWRK. Cys-93 functions as the Glycyl thioester intermediate in the catalytic mechanism.

Belongs to the ubiquitin-conjugating enzyme family. In terms of assembly, forms a tight complex with RANGAP1 and RANBP2.

The protein localises to the nucleus. The protein operates within protein modification; protein sumoylation. Functionally, accepts the ubiquitin-like proteins SUMO1, SUMO2 and SUMO3 from the UBLE1A-UBLE1B E1 complex and catalyzes their covalent attachment to other proteins with the help of an E3 ligase such as RANBP2 or CBX4. Essential for nuclear architecture and chromosome segregation. This Pagrus major (Red sea bream) protein is SUMO-conjugating enzyme UBC9 (ube2i).